The sequence spans 303 residues: ATP synthase gamma chain (303 aa).

Belongs to the ATPase gamma chain family. In terms of assembly, F-type ATPases have 2 components, CF(1) - the catalytic core - and CF(0) - the membrane proton channel. CF(1) has five subunits: alpha(3), beta(3), gamma(1), delta(1), epsilon(1). CF(0) has three main subunits: a, b and c.

It localises to the cell inner membrane. Produces ATP from ADP in the presence of a proton gradient across the membrane. The gamma chain is believed to be important in regulating ATPase activity and the flow of protons through the CF(0) complex. The polypeptide is ATP synthase gamma chain (Elusimicrobium minutum (strain Pei191)).